A 432-amino-acid chain; its full sequence is Alpha-ketoglutarate permease (432 aa).

The Cytoplasmic segment spans residues 1–32; that stretch reads MAESTVTADSKLTSSDTRRRIWAIVGASSGNL. The helical transmembrane segment at 33–53 threads the bilayer; the sequence is VEWFDFYVYSFCSLYFAHIFF. Over 54–62 the chain is Periplasmic; sequence PSGNTTTQL. A helical transmembrane segment spans residues 63-83; the sequence is LQTAGVFAAGFLMRPIGGWLF. Residues 84-95 lie on the Cytoplasmic side of the membrane; the sequence is GRIADKHGRKKS. A helical membrane pass occupies residues 96-116; that stretch reads MLLSVCMMCFGSLVIACLPGY. Residues 117 to 118 are Periplasmic-facing; sequence ET. A helical transmembrane segment spans residues 119-139; that stretch reads IGTWAPALLLLARLFQGLSVG. Topologically, residues 140-162 are cytoplasmic; sequence GEYGTSATYMSEVAVEGRKGFYA. A helical membrane pass occupies residues 163-183; the sequence is SFQYVTLIGGQLLALLVVVVL. At 184–193 the chain is on the periplasmic side; that stretch reads QHTMEDAALR. The chain crosses the membrane as a helical span at residues 194–214; the sequence is EWGWRIPFALGAVLAVVALWL. The Cytoplasmic segment spans residues 215-243; that stretch reads RRQLDETSQQETRALKEAGSLKGLWRNRR. The chain crosses the membrane as a helical span at residues 244 to 264; sequence AFIMVLGFTAAGSLCFYTFTT. Residues 265-279 lie on the Periplasmic side of the membrane; that stretch reads YMQKYLVNTAGMHAN. A helical membrane pass occupies residues 280-300; sequence VASGIMTAALFVFMLIQPLIG. Residues 301-309 are Cytoplasmic-facing; that stretch reads ALSDKIGRR. The helical transmembrane segment at 310-330 threads the bilayer; the sequence is TSMLCFGSLAAIFTVPILSAL. At 331-339 the chain is on the periplasmic side; that stretch reads QNVSSPYAA. A helical transmembrane segment spans residues 340 to 360; sequence FGLVMCALLIVSFYTSISGIL. Topologically, residues 361 to 373 are cytoplasmic; that stretch reads KAEMFPAQVRALG. Residues 374 to 394 form a helical membrane-spanning segment; that stretch reads VGLSYAVANAIFGGSAEYVAL. At 395 to 402 the chain is on the periplasmic side; that stretch reads SLKSIGME. Residues 403–423 form a helical membrane-spanning segment; sequence TAFFWYVTLMAVVAFLVSLML. Over 424 to 432 the chain is Cytoplasmic; sequence HRKGKGMRL.

The protein belongs to the major facilitator superfamily. Metabolite:H+ Symporter (MHS) family (TC 2.A.1.6) family.

The protein resides in the cell inner membrane. Functionally, uptake of alpha-ketoglutarate across the boundary membrane with the concomitant import of a cation (symport system). In Escherichia coli (strain K12), this protein is Alpha-ketoglutarate permease (kgtP).